A 303-amino-acid chain; its full sequence is UDP-3-O-acyl-N-acetylglucosamine deacetylase (303 aa).

Positions 78, 237, and 241 each coordinate Zn(2+). Histidine 264 serves as the catalytic Proton donor.

It belongs to the LpxC family. It depends on Zn(2+) as a cofactor.

The catalysed reaction is a UDP-3-O-[(3R)-3-hydroxyacyl]-N-acetyl-alpha-D-glucosamine + H2O = a UDP-3-O-[(3R)-3-hydroxyacyl]-alpha-D-glucosamine + acetate. It functions in the pathway glycolipid biosynthesis; lipid IV(A) biosynthesis; lipid IV(A) from (3R)-3-hydroxytetradecanoyl-[acyl-carrier-protein] and UDP-N-acetyl-alpha-D-glucosamine: step 2/6. In terms of biological role, catalyzes the hydrolysis of UDP-3-O-myristoyl-N-acetylglucosamine to form UDP-3-O-myristoylglucosamine and acetate, the committed step in lipid A biosynthesis. In Xanthomonas euvesicatoria pv. vesicatoria (strain 85-10) (Xanthomonas campestris pv. vesicatoria), this protein is UDP-3-O-acyl-N-acetylglucosamine deacetylase.